The primary structure comprises 494 residues: Probable malate:quinone oxidoreductase (494 aa).

This sequence belongs to the MQO family. The cofactor is FAD.

It carries out the reaction (S)-malate + a quinone = a quinol + oxaloacetate. It functions in the pathway carbohydrate metabolism; tricarboxylic acid cycle; oxaloacetate from (S)-malate (quinone route): step 1/1. The protein is Probable malate:quinone oxidoreductase of Kocuria rhizophila (strain ATCC 9341 / DSM 348 / NBRC 103217 / DC2201).